The primary structure comprises 164 residues: Heat shock protein beta-6 (164 aa).

Positions 1–72 (MEIPVSVQPS…PTAQVSTDPG (72 aa)) are involved in stabilization of the HSPB1:HSBP6 heterodimer. Ser-16 is subject to Phosphoserine. Residues 56-163 (RAPSVALPTA…PLQSPPGAAA (108 aa)) enclose the sHSP domain. Gln-66 is subject to Deamidated glutamine. Phosphoserine is present on Ser-157.

The protein belongs to the small heat shock protein (HSP20) family. Homodimer. Small heat shock proteins form high molecular mass oligomers containing variable number of monomers; these oligomers display a very flexible quaternary structure easily exchanging their subunits. Heterooligomer with HSPB1; formed through oligomerization of HSPB1:HSBP6 dimers; subunit exchange leads to formation of at least two different heterooligomeric complexes, differing in variable quantities of HSPB1 and HSPB6 homodimers in addition to HSPB1:HSPB6 heterodimers. Heterooligomer with CRYAB; large heterooligomers consist of CRYAB homodimers and HSPB5:HSPB6 heterodimers but lacking HSPB6 homodimers. Interacts with BAG3. Interacts (phosphorylated) with YWHAZ. Interacts with PDE4A and PDE4D; required for maintenance of the non-phosphorylated state of HSPB6 under basal conditions. Interacts with KDR. Interacts with PRKD1. In terms of processing, phosphorylated at Ser-16 by PKA and probably PKD1K; required to protect cardiomyocytes from apoptosis.

It localises to the cytoplasm. The protein localises to the nucleus. The protein resides in the secreted. In terms of biological role, small heat shock protein which functions as a molecular chaperone probably maintaining denatured proteins in a folding-competent state. Seems to have versatile functions in various biological processes. Plays a role in regulating muscle function such as smooth muscle vasorelaxation and cardiac myocyte contractility. May regulate myocardial angiogenesis implicating KDR. Overexpression mediates cardioprotection and angiogenesis after induced damage. Stabilizes monomeric YWHAZ thereby supporting YWHAZ chaperone-like activity. The sequence is that of Heat shock protein beta-6 (HSPB6) from Bos taurus (Bovine).